We begin with the raw amino-acid sequence, 316 residues long: 4-hydroxy-3-methylbut-2-enyl diphosphate reductase (316 aa).

Cys12 contributes to the [4Fe-4S] cluster binding site. Positions 41 and 74 each coordinate (2E)-4-hydroxy-3-methylbut-2-enyl diphosphate. Residues His41 and His74 each contribute to the dimethylallyl diphosphate site. The isopentenyl diphosphate site is built by His41 and His74. Residue Cys96 coordinates [4Fe-4S] cluster. His124 is a (2E)-4-hydroxy-3-methylbut-2-enyl diphosphate binding site. His124 is a binding site for dimethylallyl diphosphate. An isopentenyl diphosphate-binding site is contributed by His124. The active-site Proton donor is the Glu126. Thr167 serves as a coordination point for (2E)-4-hydroxy-3-methylbut-2-enyl diphosphate. Cys197 contributes to the [4Fe-4S] cluster binding site. The (2E)-4-hydroxy-3-methylbut-2-enyl diphosphate site is built by Ser225, Ser226, Asn227, and Ser269. Ser225, Ser226, Asn227, and Ser269 together coordinate dimethylallyl diphosphate. Isopentenyl diphosphate contacts are provided by Ser225, Ser226, Asn227, and Ser269.

This sequence belongs to the IspH family. In terms of assembly, homodimer. The cofactor is [4Fe-4S] cluster.

It catalyses the reaction isopentenyl diphosphate + 2 oxidized [2Fe-2S]-[ferredoxin] + H2O = (2E)-4-hydroxy-3-methylbut-2-enyl diphosphate + 2 reduced [2Fe-2S]-[ferredoxin] + 2 H(+). It carries out the reaction dimethylallyl diphosphate + 2 oxidized [2Fe-2S]-[ferredoxin] + H2O = (2E)-4-hydroxy-3-methylbut-2-enyl diphosphate + 2 reduced [2Fe-2S]-[ferredoxin] + 2 H(+). Its pathway is isoprenoid biosynthesis; dimethylallyl diphosphate biosynthesis; dimethylallyl diphosphate from (2E)-4-hydroxy-3-methylbutenyl diphosphate: step 1/1. It participates in isoprenoid biosynthesis; isopentenyl diphosphate biosynthesis via DXP pathway; isopentenyl diphosphate from 1-deoxy-D-xylulose 5-phosphate: step 6/6. Catalyzes the conversion of 1-hydroxy-2-methyl-2-(E)-butenyl 4-diphosphate (HMBPP) into a mixture of isopentenyl diphosphate (IPP) and dimethylallyl diphosphate (DMAPP). Acts in the terminal step of the DOXP/MEP pathway for isoprenoid precursor biosynthesis. In Escherichia coli (strain ATCC 8739 / DSM 1576 / NBRC 3972 / NCIMB 8545 / WDCM 00012 / Crooks), this protein is 4-hydroxy-3-methylbut-2-enyl diphosphate reductase.